Here is a 699-residue protein sequence, read N- to C-terminus: Transketolase (699 aa).

A substrate-binding site is contributed by H45. Residues T48, H85, and 133-135 (GPL) each bind thiamine diphosphate. A Mg(2+)-binding site is contributed by D177. Positions 178 and 207 each coordinate thiamine diphosphate. Residues N207 and I209 each coordinate Mg(2+). Substrate-binding residues include H283, R378, and S405. H283 is a binding site for thiamine diphosphate. Catalysis depends on E441, which acts as the Proton donor. A thiamine diphosphate-binding site is contributed by F467. Substrate-binding residues include H491, D499, and R552.

Belongs to the transketolase family. In terms of assembly, homodimer. The cofactor is Mg(2+). Ca(2+) serves as cofactor. It depends on Mn(2+) as a cofactor. Co(2+) is required as a cofactor. Requires thiamine diphosphate as cofactor.

It carries out the reaction D-sedoheptulose 7-phosphate + D-glyceraldehyde 3-phosphate = aldehydo-D-ribose 5-phosphate + D-xylulose 5-phosphate. In terms of biological role, catalyzes the transfer of a two-carbon ketol group from a ketose donor to an aldose acceptor, via a covalent intermediate with the cofactor thiamine pyrophosphate. The polypeptide is Transketolase (tkt) (Mycobacterium leprae (strain TN)).